A 439-amino-acid chain; its full sequence is Adenylosuccinate synthetase (439 aa).

GTP is bound by residues 25 to 31 and 53 to 55; these read GDEGKGK and GHT. Asp-26 (proton acceptor) is an active-site residue. Residues Asp-26 and Gly-53 each contribute to the Mg(2+) site. Residues 26-29, 51-54, Thr-146, Arg-160, Asn-237, Thr-252, and Arg-316 each bind IMP; these read DEGK and NAGH. Residue His-54 is the Proton donor of the active site. 312-318 is a binding site for substrate; that stretch reads VTTGRRR. Residues Arg-318, 344–346, and 426–428 contribute to the GTP site; these read KLD and GVG.

This sequence belongs to the adenylosuccinate synthetase family. Homodimer. Requires Mg(2+) as cofactor.

It localises to the cytoplasm. The catalysed reaction is IMP + L-aspartate + GTP = N(6)-(1,2-dicarboxyethyl)-AMP + GDP + phosphate + 2 H(+). The protein operates within purine metabolism; AMP biosynthesis via de novo pathway; AMP from IMP: step 1/2. Plays an important role in the de novo pathway and in the salvage pathway of purine nucleotide biosynthesis. Catalyzes the first committed step in the biosynthesis of AMP from IMP. This Mycosarcoma maydis (Corn smut fungus) protein is Adenylosuccinate synthetase.